The sequence spans 146 residues: Large ribosomal subunit protein bL9 (146 aa).

Belongs to the bacterial ribosomal protein bL9 family.

Functionally, binds to the 23S rRNA. This is Large ribosomal subunit protein bL9 from Flavobacterium johnsoniae (strain ATCC 17061 / DSM 2064 / JCM 8514 / BCRC 14874 / CCUG 350202 / NBRC 14942 / NCIMB 11054 / UW101) (Cytophaga johnsonae).